Here is a 219-residue protein sequence, read N- to C-terminus: Protein-L-isoaspartate O-methyltransferase 2 (219 aa).

The active site involves serine 66.

Belongs to the methyltransferase superfamily. L-isoaspartyl/D-aspartyl protein methyltransferase family.

The protein localises to the cytoplasm. It carries out the reaction [protein]-L-isoaspartate + S-adenosyl-L-methionine = [protein]-L-isoaspartate alpha-methyl ester + S-adenosyl-L-homocysteine. In terms of biological role, catalyzes the methyl esterification of L-isoaspartyl residues in peptides and proteins that result from spontaneous decomposition of normal L-aspartyl and L-asparaginyl residues. It plays a role in the repair and/or degradation of damaged proteins. The polypeptide is Protein-L-isoaspartate O-methyltransferase 2 (Marinobacter nauticus (strain ATCC 700491 / DSM 11845 / VT8) (Marinobacter aquaeolei)).